Reading from the N-terminus, the 449-residue chain is Na(+)-translocating NADH-quinone reductase subunit A (449 aa).

It belongs to the NqrA family. Composed of six subunits; NqrA, NqrB, NqrC, NqrD, NqrE and NqrF.

It carries out the reaction a ubiquinone + n Na(+)(in) + NADH + H(+) = a ubiquinol + n Na(+)(out) + NAD(+). Its function is as follows. NQR complex catalyzes the reduction of ubiquinone-1 to ubiquinol by two successive reactions, coupled with the transport of Na(+) ions from the cytoplasm to the periplasm. NqrA to NqrE are probably involved in the second step, the conversion of ubisemiquinone to ubiquinol. In Actinobacillus pleuropneumoniae serotype 3 (strain JL03), this protein is Na(+)-translocating NADH-quinone reductase subunit A.